Here is a 1144-residue protein sequence, read N- to C-terminus: PAN2-PAN3 deadenylation complex catalytic subunit PAN2 (1144 aa).

4 WD repeats span residues 27–66, 153–193, 196–233, and 302–341; these read KKEKQVTKVVFDTEANLIWAGDSYGRVSSYDPTYSLYTRH, SSTY…VIHS, GHSASITSMDFKDNTLVTAGKSKTFGYLQSDQFINVYD, and HPCKSISQFTLSPSGDYLAFLEEESMINMWNRSNSMSGFT. A linker region spans residues 344–481; it reads AAVLEYQDYP…LLEYKPSNNI (138 aa). Residues 482–887 form the USP domain; it reads DIPPAYSKLQ…TPEIVVYSDA (406 aa). In terms of domain architecture, Exonuclease spans 939-1110; the sequence is VALDAEFVSL…EDAHTALLLY (172 aa). The a divalent metal cation site is built by Asp942, Glu944, Asp1051, and Asp1102.

It belongs to the peptidase C19 family. PAN2 subfamily. As to quaternary structure, forms a heterotrimer with an asymmetric homodimer of the regulatory subunit PAN3 to form the poly(A)-nuclease (PAN) deadenylation complex. A divalent metal cation is required as a cofactor.

It is found in the cytoplasm. It catalyses the reaction Exonucleolytic cleavage of poly(A) to 5'-AMP.. Positively regulated by the regulatory subunit PAN3. Catalytic subunit of the poly(A)-nuclease (PAN) deadenylation complex, one of two cytoplasmic mRNA deadenylases involved in mRNA turnover. PAN specifically shortens poly(A) tails of RNA and the activity is stimulated by poly(A)-binding protein PAB1. PAN deadenylation is followed by rapid degradation of the shortened mRNA tails by the CCR4-NOT complex. Deadenylated mRNAs are then degraded by two alternative mechanisms, namely exosome-mediated 3'-5' exonucleolytic degradation, or deadenylation-dependent mRNA decaping and subsequent 5'-3' exonucleolytic degradation by XRN1. May also be involved in post-transcriptional maturation of mRNA poly(A) tails. The sequence is that of PAN2-PAN3 deadenylation complex catalytic subunit PAN2 from Kluyveromyces lactis (strain ATCC 8585 / CBS 2359 / DSM 70799 / NBRC 1267 / NRRL Y-1140 / WM37) (Yeast).